The following is a 419-amino-acid chain: Gamma-glutamyl phosphate reductase (419 aa).

The protein belongs to the gamma-glutamyl phosphate reductase family.

The protein localises to the cytoplasm. It carries out the reaction L-glutamate 5-semialdehyde + phosphate + NADP(+) = L-glutamyl 5-phosphate + NADPH + H(+). The protein operates within amino-acid biosynthesis; L-proline biosynthesis; L-glutamate 5-semialdehyde from L-glutamate: step 2/2. In terms of biological role, catalyzes the NADPH-dependent reduction of L-glutamate 5-phosphate into L-glutamate 5-semialdehyde and phosphate. The product spontaneously undergoes cyclization to form 1-pyrroline-5-carboxylate. The chain is Gamma-glutamyl phosphate reductase from Tolumonas auensis (strain DSM 9187 / NBRC 110442 / TA 4).